Reading from the N-terminus, the 204-residue chain is Oocyte-specific homeobox protein 1 (204 aa).

Residues 28 to 73 (EPARNLAFQMRQSPLVTPGSTTKSSLSVPERNLLKQESQGPSRQSG) are disordered. Polar residues-rich tracts occupy residues 37 to 54 (MRQSPLVTPGSTTKSSLS) and 62 to 72 (KQESQGPSRQS). Residues 94 to 153 (FRKERTVYTKEQQGLLQKHFDECQYPNKKKIVELALSVGVTKREIKIWFKNNRAKYRRMN) constitute a DNA-binding region (homeobox).

The protein belongs to the paired homeobox family. Obox subfamily. Specifically expressed in oocytes and early embryos.

It is found in the nucleus. Transcription factor required for zygotic genome activation (ZGA), a critical event in early embryonic development during which the developmental control passes from maternally provided mRNAs to the expression of the zygotic genome after fertilization. Together with other Obox family members, required in early two-cell stage embryos to kick-start the major ZGA wave by facilitating RNA Polymerase II 'pre-configuration', during which RNA Polymerase II relocates from the initial one-cell stage binding targets to ZGA gene promoters and distal enhancers. Mechanistically, promotes recruitment of RNA Polymerase II from (CG-rich) non-ZGA genes to (CG-poor) ZGA genes at the two-cell stage. Binds to regulatory DNA sequences containing a 5'-ACNCCTTTAATCCCAG-3' sequence motif. Most maternal and zygotic Obox family proteins can compensate for one another. In addition to its role in ZGA, promotes embryonic stem cell pluripotency. In Mus musculus (Mouse), this protein is Oocyte-specific homeobox protein 1.